The sequence spans 800 residues: Protein SPT2 homolog (800 aa).

Residues 1–687 are important for interaction with DNA; the sequence is MDFHSVLRMA…PGHRPNMQPP (687 aa). A coiled-coil region spans residues 53–82; that stretch reads QEIQNKEVEAKRKKEGLLAKRKELKHDRKA. 3 disordered regions span residues 70-173, 197-646, and 661-698; these read LAKR…PALN, KEER…MAKP, and VPKSINGHMNGMRSAVPPGHRPNMQPPGRPLPPITSSY. The segment covering 124–137 has biased composition (acidic residues); sequence TEEDEEYMTEEELY. The span at 155 to 164 shows a compositional bias: low complexity; that stretch reads PQKVAKAAPG. Residues 196–224 are a coiled coil; that stretch reads KKEERLRTAEELKELEFLERKAQKADRKD. 2 stretches are compositionally biased toward basic and acidic residues: residues 197–226 and 249–259; these read KEERLRTAEELKELEFLERKAQKADRKDPM and HSVEKRSHENS. Residues 260–272 show a composition bias toward polar residues; sequence KSSSTEQNGTFRK. A compositionally biased stretch (basic and acidic residues) spans 273–295; the sequence is SSSDNRSREEKSGSVFHTKDSKF. Low complexity-rich tracts occupy residues 328–360, 367–377, 390–424, 443–501, and 514–581; these read SGSTSLRPSSGGSSSVSGRPSGSSEKPGSSSGK, SSSARSSSGSG, GASGSGSARSVGESGSRSGKPTGASGSGLARSVGA, GVSG…SVSG, and GAPG…ASSS. The segment covering 608–626 has biased composition (polar residues); sequence NSVRHNTTSISVSARSSLG. Residues 684–693 show a composition bias toward pro residues; it reads MQPPGRPLPP. An important for interaction with histones region spans residues 688–800; it reads GRPLPPITSS…LKSAKKMKSR (113 aa). A coiled-coil region spans residues 756-800; the sequence is REQQKEEARSLRLGIQEDLEELRREEEELKQKAKQLKSAKKMKSR.

Belongs to the SPT2 family. Interacts with histones. Interacts with a heterotetrameric complex formed by histone H3 and H4, especially when the histone tetramer is not bound to DNA.

It is found in the nucleus. The protein resides in the nucleolus. In terms of biological role, histone chaperone that stabilizes pre-existing histone tetramers and regulates replication-independent histone exchange on chromatin. Required for normal chromatin refolding in the coding region of transcribed genes, and for the suppression of spurious transcription. Binds DNA and histones and promotes nucleosome assembly (in vitro). Facilitates formation of tetrameric histone complexes containing histone H3 and H4. Modulates RNA polymerase 1-mediated transcription. Binds DNA, with a preference for branched DNA species, such as Y-form DNA and Holliday junction DNA. The sequence is that of Protein SPT2 homolog (spty2d1) from Xenopus laevis (African clawed frog).